Reading from the N-terminus, the 372-residue chain is Probable arabinan endo-1,5-alpha-L-arabinosidase B (372 aa).

The first 16 residues, Met-1 to Cys-16, serve as a signal peptide directing secretion. Positions Ser-23–Glu-34 are enriched in low complexity. Positions Ser-23–Ala-52 are disordered. Asp-59 (proton acceptor) is an active-site residue. The N-linked (GlcNAc...) asparagine glycan is linked to Asn-120. Glu-252 functions as the Proton donor in the catalytic mechanism. N-linked (GlcNAc...) asparagine glycosylation occurs at Asn-363.

It belongs to the glycosyl hydrolase 43 family.

Its subcellular location is the secreted. It catalyses the reaction Endohydrolysis of (1-&gt;5)-alpha-arabinofuranosidic linkages in (1-&gt;5)-arabinans.. It functions in the pathway glycan metabolism; L-arabinan degradation. Endo-1,5-alpha-L-arabinanase involved in degradation of pectin. Its preferred substrate is linear 1,5-alpha-L-arabinan. The sequence is that of Probable arabinan endo-1,5-alpha-L-arabinosidase B (abnB) from Aspergillus fumigatus (strain CBS 144.89 / FGSC A1163 / CEA10) (Neosartorya fumigata).